A 211-amino-acid chain; its full sequence is Thymidylate kinase (211 aa).

Gly10 to Thr17 is an ATP binding site.

This sequence belongs to the thymidylate kinase family.

The enzyme catalyses dTMP + ATP = dTDP + ADP. Phosphorylation of dTMP to form dTDP in both de novo and salvage pathways of dTTP synthesis. This chain is Thymidylate kinase, found in Lactococcus lactis subsp. cremoris (strain MG1363).